We begin with the raw amino-acid sequence, 675 residues long: DNA ligase (675 aa).

Residues 32–36, 81–82, and Glu-113 each bind NAD(+); these read DAEYD and SL. The active-site N6-AMP-lysine intermediate is the Lys-115. Residues Arg-136, Glu-173, Lys-291, and Lys-315 each coordinate NAD(+). 4 residues coordinate Zn(2+): Cys-409, Cys-412, Cys-427, and Cys-433. One can recognise a BRCT domain in the interval 595–675; the sequence is SEKTYFFNKK…ELNSLIRIKE (81 aa).

Belongs to the NAD-dependent DNA ligase family. LigA subfamily. The cofactor is Mg(2+). It depends on Mn(2+) as a cofactor.

The catalysed reaction is NAD(+) + (deoxyribonucleotide)n-3'-hydroxyl + 5'-phospho-(deoxyribonucleotide)m = (deoxyribonucleotide)n+m + AMP + beta-nicotinamide D-nucleotide.. Its function is as follows. DNA ligase that catalyzes the formation of phosphodiester linkages between 5'-phosphoryl and 3'-hydroxyl groups in double-stranded DNA using NAD as a coenzyme and as the energy source for the reaction. It is essential for DNA replication and repair of damaged DNA. In Buchnera aphidicola subsp. Acyrthosiphon pisum (strain 5A), this protein is DNA ligase.